The chain runs to 367 residues: Apolipoprotein A-V (367 aa).

The first 20 residues, 1 to 20 (MVAVLTWALALLSAFATVQT), serve as a signal peptide directing secretion. The residue at position 56 (Ser-56) is a Phosphoserine. A disordered region spans residues 71–90 (LGPLSGQGREPPGLPHDPEG).

This sequence belongs to the apolipoprotein A1/A4/E family. In terms of assembly, interacts with GPIHBP1. Interacts with SORL1; this interaction leads to APOA5 internalization and sorting either to lysosomes and degradation, or to the trans-Golgi network. In terms of processing, phosphorylated by FAM20C in the extracellular medium.

It localises to the secreted. It is found in the early endosome. The protein resides in the late endosome. Its subcellular location is the golgi apparatus. The protein localises to the trans-Golgi network. Its function is as follows. Minor apolipoprotein mainly associated with HDL and to a lesser extent with VLDL. May also be associated with chylomicrons. Important determinant of plasma triglyceride (TG) levels by both being a potent stimulator of apo-CII lipoprotein lipase (LPL) TG hydrolysis and an inhibitor of the hepatic VLDL-TG production rate (without affecting the VLDL-apoB production rate). Activates poorly lecithin:cholesterol acyltransferase (LCAT) and does not enhance efflux of cholesterol from macrophages. Binds heparin. This is Apolipoprotein A-V (APOA5) from Neomonachus schauinslandi (Hawaiian monk seal).